The sequence spans 316 residues: Ribosomal RNA small subunit methyltransferase H (316 aa).

S-adenosyl-L-methionine is bound by residues 35 to 37, D55, F84, D105, and Q112; that span reads SGH.

The protein belongs to the methyltransferase superfamily. RsmH family.

It is found in the cytoplasm. It carries out the reaction cytidine(1402) in 16S rRNA + S-adenosyl-L-methionine = N(4)-methylcytidine(1402) in 16S rRNA + S-adenosyl-L-homocysteine + H(+). Specifically methylates the N4 position of cytidine in position 1402 (C1402) of 16S rRNA. This is Ribosomal RNA small subunit methyltransferase H from Streptococcus equi subsp. equi (strain 4047).